Consider the following 415-residue polypeptide: Plasminogen activator inhibitor 2, macrophage (415 aa).

N-linked (GlcNAc...) asparagine glycans are attached at residues Asn23, Asn75, Asn261, and Asn339.

Belongs to the serpin family. Ov-serpin subfamily. In terms of assembly, interacts with PSMB1. In terms of processing, the signal sequence is not cleaved.

It is found in the cytoplasm. Its subcellular location is the secreted. The protein localises to the extracellular space. Inhibits urokinase-type plasminogen activator. The monocyte derived PAI-2 is distinct from the endothelial cell-derived PAI-1. Not required for normal murine development or survival. This chain is Plasminogen activator inhibitor 2, macrophage (Serpinb2), found in Mus musculus (Mouse).